Reading from the N-terminus, the 65-residue chain is Large ribosomal subunit protein bL35 (65 aa).

The interval methionine 1–lysine 28 is disordered.

The protein belongs to the bacterial ribosomal protein bL35 family.

In Acidobacterium capsulatum (strain ATCC 51196 / DSM 11244 / BCRC 80197 / JCM 7670 / NBRC 15755 / NCIMB 13165 / 161), this protein is Large ribosomal subunit protein bL35.